Here is a 1529-residue protein sequence, read N- to C-terminus: Mediator of RNA polymerase II transcription subunit 1.1 (1529 aa).

Disordered stretches follow at residues 685 to 740, 807 to 919, and 933 to 1529; these read PDAA…VVGE, QYRM…MRDN, and PDIE…IDDE. Residues 693 to 702 show a composition bias toward basic residues; that stretch reads GKQRKPRAKK. Low complexity-rich tracts occupy residues 722–739 and 807–828; these read GAAAVGAGSGRKSSGVVG and QYRMHMQQQQLQQQQMQSPQQQ. Over residues 894–905 the composition is skewed to pro residues; that stretch reads TPSPLSAPPKPF. The span at 908 to 919 shows a compositional bias: basic and acidic residues; sequence EQHHFGTKMRDN. Composition is skewed to low complexity over residues 958–990 and 1008–1023; these read SSSSDPSTSGESSNATESASSAPLMKPPTTAQT and QEQALQKQEQQRIQQQ. A coiled-coil region spans residues 1008-1032; the sequence is QEQALQKQEQQRIQQQDSVDSTNSE. 3 stretches are compositionally biased toward polar residues: residues 1051–1061, 1068–1089, and 1096–1105; these read NQVNRVMNMSN, GSSTNTSDIKPSLASLQKSTGS, and TPGTSSNIAQ. 4 stretches are compositionally biased toward basic and acidic residues: residues 1113-1130, 1137-1185, 1192-1240, and 1262-1278; these read LKKEVEEQPPEREKEKLI, LKVD…ERDK, RDRT…KELS, and PKKDTVDEDKKEPKDES. The stretch at 1169–1202 forms a coiled coil; sequence EKEDKSQREKDKKERDKERKRRDRDRTEAKKEKD. Low complexity predominate over residues 1279–1288; the sequence is IPGPSTSSES. Basic and acidic residues predominate over residues 1289–1304; the sequence is STRKEVAPAPISRKES. Low complexity predominate over residues 1349-1365; it reads SYSGSSNAGPISSSSRG. 2 stretches are compositionally biased toward pro residues: residues 1375–1386 and 1477–1500; these read PVLPPPALPMRG and QPPPPPQMIPLPKENPPPPLAPPS.

Belongs to the Mediator complex subunit 1 family. As to quaternary structure, component of the Mediator complex.

It is found in the nucleus. Its function is as follows. Component of the Mediator complex, a coactivator involved in the regulated transcription of nearly all RNA polymerase II-dependent genes. Mediator functions as a bridge to convey information from gene-specific regulatory proteins to the basal RNA polymerase II transcription machinery. Mediator is recruited to promoters by direct interactions with regulatory proteins and serves as a scaffold for the assembly of a functional preinitiation complex with RNA polymerase II and the general transcription factors. The protein is Mediator of RNA polymerase II transcription subunit 1.1 (sop-3) of Caenorhabditis briggsae.